The sequence spans 290 residues: MSVCSSSSSSQKTWIVNGILAGTAIAAAIGARAYLGRSKKFRSRVVGIIPARYASSRFEGKPLVQILGKPMIQRTWERSKLATTLDHIVVATDDERIAECCRGFGADVIMTSESCRNGTERCNEALEKLEKKYDVVVNIQGDEPLIEPEIIDGVVKALQVTPDAVFSTAVTSLKPEDGLDPNRVKCVVDNRGYAIYFSRGLIPYNKSGKVNPDFPYMLHLGIQSFDSKFLKVYSELQPTPLQQEEDLEQLKVLENGYKMKVIKVDHEAHGVDTPDDVEKIESLMRERNMS.

The transit peptide at 1 to 50 directs the protein to the mitochondrion; it reads MSVCSSSSSSQKTWIVNGILAGTAIAAAIGARAYLGRSKKFRSRVVGIIP.

The protein belongs to the KdsB family. Requires Mg(2+) as cofactor. In terms of tissue distribution, expressed in roots, leaves, stems and siliques.

It localises to the mitochondrion outer membrane. It carries out the reaction 3-deoxy-alpha-D-manno-oct-2-ulosonate + CTP = CMP-3-deoxy-beta-D-manno-octulosonate + diphosphate. The protein operates within nucleotide-sugar biosynthesis; CMP-3-deoxy-D-manno-octulosonate biosynthesis; CMP-3-deoxy-D-manno-octulosonate from 3-deoxy-D-manno-octulosonate and CTP: step 1/1. Its activity is regulated as follows. Inhibited by 2beta-deoxy-Kdo. Its function is as follows. Catalyzes the production of the sugar nucleotide CMP-3-deoxy-D-manno-octulosonate (CMP-KDO). CTP is the preferred nucleotide donor, but it can partially be replaced with UTP. Activates KDO during the biosynthesis of rhamnogalacturonan II (RG-II), a structurally complex pectic polysaccharide of the primary cell wall. RG-II is essential for the cell wall integrity of rapidly growing tissues and pollen tube growth and elongation. This is 3-deoxy-manno-octulosonate cytidylyltransferase, mitochondrial from Arabidopsis thaliana (Mouse-ear cress).